The chain runs to 447 residues: Na(+)-translocating NADH-quinone reductase subunit A (447 aa).

This sequence belongs to the NqrA family. As to quaternary structure, composed of six subunits; NqrA, NqrB, NqrC, NqrD, NqrE and NqrF.

The catalysed reaction is a ubiquinone + n Na(+)(in) + NADH + H(+) = a ubiquinol + n Na(+)(out) + NAD(+). Its function is as follows. NQR complex catalyzes the reduction of ubiquinone-1 to ubiquinol by two successive reactions, coupled with the transport of Na(+) ions from the cytoplasm to the periplasm. NqrA to NqrE are probably involved in the second step, the conversion of ubisemiquinone to ubiquinol. The sequence is that of Na(+)-translocating NADH-quinone reductase subunit A from Klebsiella pneumoniae (strain 342).